The primary structure comprises 190 residues: dITP/XTP pyrophosphatase (190 aa).

7–12 (SNNKNK) contributes to the substrate binding site. Asp68 serves as the catalytic Proton acceptor. Residue Asp68 participates in Mg(2+) binding. Substrate is bound by residues Thr69, 148-151 (FGYD), Lys171, and 176-177 (HR).

The protein belongs to the HAM1 NTPase family. As to quaternary structure, homodimer. Mg(2+) serves as cofactor.

It catalyses the reaction XTP + H2O = XMP + diphosphate + H(+). The catalysed reaction is dITP + H2O = dIMP + diphosphate + H(+). The enzyme catalyses ITP + H2O = IMP + diphosphate + H(+). In terms of biological role, pyrophosphatase that catalyzes the hydrolysis of nucleoside triphosphates to their monophosphate derivatives, with a high preference for the non-canonical purine nucleotides XTP (xanthosine triphosphate), dITP (deoxyinosine triphosphate) and ITP. Seems to function as a house-cleaning enzyme that removes non-canonical purine nucleotides from the nucleotide pool, thus preventing their incorporation into DNA/RNA and avoiding chromosomal lesions. The chain is dITP/XTP pyrophosphatase from Flavobacterium psychrophilum (strain ATCC 49511 / DSM 21280 / CIP 103535 / JIP02/86).